The primary structure comprises 636 residues: Sodium-dependent multivitamin transporter (636 aa).

Helical transmembrane passes span 24–44 (FSLV…AIGL), 68–88 (CLPV…ILGV), 101–121 (FLGC…IPVF), 143–163 (ICGT…VLYA), 176–196 (LWLS…LGGL), 199–219 (VIWT…AVII), 256–276 (FWTL…VNQA), 297–317 (VFPC…VMFA), 336–356 (FVLY…GLFV), 404–424 (FGYG…GPVL), 428–448 (ISIF…GMFF), and 456–476 (AIVG…GSIV). Asparagine 489 and asparagine 498 each carry an N-linked (GlcNAc...) asparagine glycan. Residues 528–548 (LWYSAHNSTTVIVVGLIVSLL) form a helical membrane-spanning segment. The segment at 606–627 (LRASGDKEPMTEASPVHQGTSP) is disordered.

Belongs to the sodium:solute symporter (SSF) (TC 2.A.21) family. In terms of assembly, interacts with PDZD11.

The protein localises to the cell membrane. The protein resides in the apical cell membrane. The catalysed reaction is biotin(out) + 2 Na(+)(out) = biotin(in) + 2 Na(+)(in). It carries out the reaction (R)-pantothenate(out) + 2 Na(+)(out) = (R)-pantothenate(in) + 2 Na(+)(in). It catalyses the reaction (R)-lipoate(out) + 2 Na(+)(out) = (R)-lipoate(in) + 2 Na(+)(in). The enzyme catalyses iodide(out) + 2 Na(+)(out) = iodide(in) + 2 Na(+)(in). Its function is as follows. Sodium-dependent multivitamin transporter that mediates the electrogenic transport of pantothenate, biotin, lipoate and iodide. Functions as a Na(+)-coupled substrate symporter where the stoichiometry of Na(+):substrate is 2:1, creating an electrochemical Na(+) gradient used as driving force for substrate uptake. Required for biotin and pantothenate uptake in the intestine across the brush border membrane. Plays a role in the maintenance of intestinal mucosa integrity, by providing the gut mucosa with biotin. Contributes to the luminal uptake of biotin and pantothenate into the brain across the blood-brain barrier. In Oryctolagus cuniculus (Rabbit), this protein is Sodium-dependent multivitamin transporter (SLC5A6).